The chain runs to 98 residues: Mu-type opioid receptor (98 aa).

At 1–9 (YTKMKTATN) the chain is on the cytoplasmic side. The helical transmembrane segment at 10–34 (IYIFNLALADALATSTLPFQSVNYL) threads the bilayer. Residues 35–45 (MGTWPFGTILC) are Extracellular-facing. Residues 46–68 (KIVISIDYYNMFTSIFTLCTMSV) form a helical membrane-spanning segment. At 69-88 (DRYIAVCHPVKALDFRTPRN) the chain is on the cytoplasmic side. Residue Y71 is modified to Phosphotyrosine. The helical transmembrane segment at 89 to 98 (AKTVNVCNWI) threads the bilayer.

It belongs to the G-protein coupled receptor 1 family. In terms of assembly, forms homooligomers and heterooligomers with other GPCRs, such as OPRD1, OPRK1, OPRL1, NPFFR2, ADRA2A, SSTR2, CNR1 and CCR5 (probably in dimeric forms). Interacts with heterotrimeric G proteins; interaction with a heterotrimeric complex containing GNAI1, GNB1 and GNG2 stabilizes the active conformation of the receptor and increases its affinity for endomorphin-2, the synthetic opioid peptide DAMGO and for morphinan agonists. Interacts with PPL; the interaction disrupts agonist-mediated G-protein activation. Interacts (via C-terminus) with DNAJB4 (via C-terminus). Interacts with calmodulin; the interaction inhibits the constitutive activity of OPRM1; it abolishes basal and attenuates agonist-stimulated G-protein coupling. Interacts with FLNA, PLD2, RANBP9 and WLS and GPM6A. Interacts with RTP4. Interacts with SYP and GNAS. Interacts with RGS9, RGS17, RGS20, RGS4, PPP1R9B and HINT1. Post-translationally, phosphorylated. Differentially phosphorylated in basal and agonist-induced conditions. Agonist-mediated phosphorylation modulates receptor internalization. Phosphorylated by GRK2 in a agonist-dependent manner. Phosphorylated on tyrosine residues; the phosphorylation is involved in agonist-induced G-protein-independent receptor down-regulation. In terms of processing, phosphorylated. Differentially phosphorylated in basal and agonist-induced conditions. Agonist-mediated phosphorylation modulates receptor internalization. Phosphorylated by GRK2 in a agonist-dependent manner. Phosphorylated on tyrosine residues; the phosphorylation is involved in agonist-induced G-protein-independent receptor down-regulation. Ubiquitinated. A basal ubiquitination seems not to be related to degradation. Ubiquitination is increased upon formation of OPRM1:OPRD1 oligomers leading to proteasomal degradation; the ubiquitination is diminished by RTP4.

It localises to the cell membrane. The protein localises to the cell projection. It is found in the axon. Its subcellular location is the perikaryon. The protein resides in the dendrite. It localises to the endosome. Functionally, receptor for endogenous opioids such as beta-endorphin and endomorphin. Receptor for natural and synthetic opioids including morphine, heroin, DAMGO, fentanyl, etorphine, buprenorphin and methadone. Also activated by enkephalin peptides, such as Met-enkephalin or Met-enkephalin-Arg-Phe, with higher affinity for Met-enkephalin-Arg-Phe. Agonist binding to the receptor induces coupling to an inactive GDP-bound heterotrimeric G-protein complex and subsequent exchange of GDP for GTP in the G-protein alpha subunit leading to dissociation of the G-protein complex with the free GTP-bound G-protein alpha and the G-protein beta-gamma dimer activating downstream cellular effectors. The agonist- and cell type-specific activity is predominantly coupled to pertussis toxin-sensitive G(i) and G(o) G alpha proteins, GNAI1, GNAI2, GNAI3 and GNAO1, and to a lesser extent to pertussis toxin-insensitive G alpha proteins GNAZ and GNA15. They mediate an array of downstream cellular responses, including inhibition of adenylate cyclase activity and both N-type and L-type calcium channels, activation of inward rectifying potassium channels, mitogen-activated protein kinase (MAPK), phospholipase C (PLC), phosphoinositide/protein kinase (PKC), phosphoinositide 3-kinase (PI3K) and regulation of NF-kappa-B. Also couples to adenylate cyclase stimulatory G alpha proteins. The selective temporal coupling to G-proteins and subsequent signaling can be regulated by RGSZ proteins, such as RGS9, RGS17 and RGS4. Phosphorylation by members of the GPRK subfamily of Ser/Thr protein kinases and association with beta-arrestins is involved in short-term receptor desensitization. Beta-arrestins associate with the GPRK-phosphorylated receptor and uncouple it from the G-protein thus terminating signal transduction. The phosphorylated receptor is internalized through endocytosis via clathrin-coated pits which involves beta-arrestins. The activation of the ERK pathway occurs either in a G-protein-dependent or a beta-arrestin-dependent manner and is regulated by agonist-specific receptor phosphorylation. Acts as a class A G-protein coupled receptor (GPCR) which dissociates from beta-arrestin at or near the plasma membrane and undergoes rapid recycling. Receptor down-regulation pathways are varying with the agonist and occur dependent or independent of G-protein coupling. Endogenous ligands induce rapid desensitization, endocytosis and recycling. Heterooligomerization with other GPCRs can modulate agonist binding, signaling and trafficking properties. Involved in neurogenesis. The chain is Mu-type opioid receptor (OPRM1) from Cavia porcellus (Guinea pig).